Consider the following 507-residue polypeptide: RNA-splicing ligase RtcB homolog (507 aa).

Positions 121, 124, 229, 261, and 355 each coordinate Mn(2+). 228–232 is a binding site for GMP; it reads NHYAE. Residues 355–356, 404–407, serine 411, 430–433, and lysine 506 each bind GMP; these read HN, GGTM, and HGAG. Catalysis depends on histidine 430, which acts as the GMP-histidine intermediate.

Belongs to the RtcB family. In terms of assembly, catalytic component of the tRNA-splicing ligase complex. It depends on Mn(2+) as a cofactor.

It carries out the reaction a 3'-end 3'-phospho-ribonucleotide-RNA + a 5'-end dephospho-ribonucleoside-RNA + GTP = a ribonucleotidyl-ribonucleotide-RNA + GMP + diphosphate. The catalysed reaction is a 3'-end 2',3'-cyclophospho-ribonucleotide-RNA + a 5'-end dephospho-ribonucleoside-RNA + GTP + H2O = a ribonucleotidyl-ribonucleotide-RNA + GMP + diphosphate + H(+). Functionally, catalytic subunit of the tRNA-splicing ligase complex that acts by directly joining spliced tRNA halves to mature-sized tRNAs by incorporating the precursor-derived splice junction phosphate into the mature tRNA as a canonical 3',5'-phosphodiester. May act as an RNA ligase with broad substrate specificity, and may function toward other RNAs. This Plasmodium yoelii yoelii protein is RNA-splicing ligase RtcB homolog.